A 418-amino-acid polypeptide reads, in one-letter code: PP2A regulatory subunit TAP46 (418 aa).

A disordered region spans residues 367-418 (KMIQESNSAWHKDGSRSAQEDEDAEEEKARAWDDWKDDNPRGAGNKKLTPCG). 2 stretches are compositionally biased toward basic and acidic residues: residues 376–385 (WHKDGSRSAQ) and 393–406 (EKAR…DDNP).

Belongs to the IGBP1/TAP42 family.

Functionally, involved in the regulation of the TOR signaling pathway. Seems to act as a regulator of PP2A catalytic activity. The protein is PP2A regulatory subunit TAP46 of Oryza sativa subsp. japonica (Rice).